A 92-amino-acid chain; its full sequence is MSAEVALVYRVLPDSAEVNIEKLKNDVINKLAPKYKVDKVEVEEIGFGIKALRLYIRMPESDEYSSDEIEELLRSVEGVGGYELEYFSRLSF.

Belongs to the EF-1-beta/EF-1-delta family.

Promotes the exchange of GDP for GTP in EF-1-alpha/GDP, thus allowing the regeneration of EF-1-alpha/GTP that could then be used to form the ternary complex EF-1-alpha/GTP/AAtRNA. This chain is Elongation factor 1-beta (ef1b), found in Pyrobaculum aerophilum (strain ATCC 51768 / DSM 7523 / JCM 9630 / CIP 104966 / NBRC 100827 / IM2).